The sequence spans 278 residues: Inosose isomerase (278 aa).

Positions 142, 174, 200, and 246 each coordinate a divalent metal cation.

It belongs to the IolI family. It depends on Mn(2+) as a cofactor. Fe(2+) is required as a cofactor. Requires Co(2+) as cofactor.

It carries out the reaction scyllo-inosose = scyllo-inosine. It functions in the pathway polyol metabolism; myo-inositol degradation into acetyl-CoA. In terms of biological role, involved in the reversible interconverion of 2-keto-myo-inositol (2KMI, inosose or 2,4,6/3,5-pentahydroxycyclohexanone) to 1-keto-D-chiro-inositol (1KDCI or 2,3,5/4,6-pentahydroxycyclohexanone). This is Inosose isomerase (iolI) from Bacillus subtilis (strain 168).